Here is a 139-residue protein sequence, read N- to C-terminus: Large ribosomal subunit protein uL16 (139 aa).

The span at 1–19 (MLIPRRVKYRKQHHPKRTG) shows a compositional bias: basic residues. Positions 1–23 (MLIPRRVKYRKQHHPKRTGAAKG) are disordered.

Belongs to the universal ribosomal protein uL16 family. As to quaternary structure, part of the 50S ribosomal subunit.

Binds 23S rRNA and is also seen to make contacts with the A and possibly P site tRNAs. The polypeptide is Large ribosomal subunit protein uL16 (Cutibacterium acnes (strain DSM 16379 / KPA171202) (Propionibacterium acnes)).